The sequence spans 317 residues: Small glutamine-rich tetratricopeptide repeat-containing protein 2 (317 aa).

TPR repeat units follow at residues 14-48, 83-116, 118-150, and 151-184; these read LKQAITTGSISEEEKESLEVAAQCIQDSFKIKPEE, AEKLKLEGNNAIAAKDYQKALDLYTKAIEIDPTS, VYYSNRAAAYNQLGQFENAVEDALTCLSLDPHH, and ARAFGRLGRAKLSLGDAAAAADAYKKGLDFDPNN. Residues 198–215 are compositionally biased toward polar residues; sequence LNQPSDSSATSGADQART. Disordered regions lie at residues 198–224 and 298–317; these read LNQPSDSSATSGADQARTSAGAAPDLG and MNNNNNGNTDNNNQGNPPPQ.

This sequence belongs to the SGT family.

Its subcellular location is the cytoplasm. It localises to the nucleus. In terms of biological role, co-chaperone that binds to the molecular chaperone Hsp70 and regulates Hsp70 ATPase activity. This Schizosaccharomyces pombe (strain 972 / ATCC 24843) (Fission yeast) protein is Small glutamine-rich tetratricopeptide repeat-containing protein 2 (sgt2).